Here is a 683-residue protein sequence, read N- to C-terminus: Rhophilin-2-B (683 aa).

Residues 25 to 99 form the REM-1 domain; that stretch reads KSIAQTGRSK…LERLNISVEV (75 aa). The 392-residue stretch at 110–501 folds into the BRO1 domain; the sequence is PLIPLGLKET…TDIFQRLGPL (392 aa). The PDZ domain maps to 515-592; sequence KMCITKEDGD…DSIEIQVISI (78 aa).

Belongs to the RHPN family. In terms of assembly, interacts with RhoA.

The protein resides in the cytoplasm. It is found in the perinuclear region. Functionally, binds specifically to GTP-Rho. The protein is Rhophilin-2-B (rhpn2-b) of Xenopus laevis (African clawed frog).